Here is a 325-residue protein sequence, read N- to C-terminus: Isoaspartyl peptidase/L-asparaginase (325 aa).

The active-site Nucleophile is the Thr193. Substrate contacts are provided by residues 221–224 (RIGD) and 243–246 (TGKG).

This sequence belongs to the Ntn-hydrolase family. Heterotetramer of two alpha and two beta chains arranged as a dimer of alpha/beta heterodimers. Post-translationally, cleaved into an alpha and beta chain by autocatalysis; this activates the enzyme. The N-terminal residue of the beta subunit is responsible for the nucleophile hydrolase activity. In terms of tissue distribution, developing seeds.

It carries out the reaction Cleavage of a beta-linked Asp residue from the N-terminus of a polypeptide.. In terms of biological role, acts in asparagine catabolism but also in the final steps of protein degradation via hydrolysis of a range of isoaspartyl dipeptides. This Lupinus angustifolius (Narrow-leaved blue lupine) protein is Isoaspartyl peptidase/L-asparaginase.